A 287-amino-acid chain; its full sequence is Large ribosomal subunit protein uL2 (287 aa).

The segment at 221–287 is disordered; the sequence is RGSVMNPCDH…SKRSRGGRDS (67 aa). Over residues 258 to 287 the composition is skewed to basic residues; it reads KTRKRNKPSNRYVLRKRRKTSKRSRGGRDS.

The protein belongs to the universal ribosomal protein uL2 family. As to quaternary structure, part of the 50S ribosomal subunit. Forms a bridge to the 30S subunit in the 70S ribosome.

In terms of biological role, one of the primary rRNA binding proteins. Required for association of the 30S and 50S subunits to form the 70S ribosome, for tRNA binding and peptide bond formation. It has been suggested to have peptidyltransferase activity; this is somewhat controversial. Makes several contacts with the 16S rRNA in the 70S ribosome. This Parasynechococcus marenigrum (strain WH8102) protein is Large ribosomal subunit protein uL2.